A 223-amino-acid polypeptide reads, in one-letter code: Sigma non-opioid intracellular receptor 1 (223 aa).

The Lumenal portion of the chain corresponds to 1 to 9 (MQWAAGRRW). The segment at 2–8 (QWAAGRR) is targeting to endoplasmic reticulum-associated lipid droplets. Residues 10–30 (AWITLFLTIVAVLIQAVWLWL) traverse the membrane as a helical segment. At 31–223 (GTQSFVFQRE…LTTYLFGQDS (193 aa)) the chain is on the cytoplasmic side. The tract at residues 99-106 (SLSEYVLL) is important for ligand-binding. Positions 177–223 (VIPSTLAFALSDTIFSTQDFLTLFYTLRAYARGLRLELTTYLFGQDS) are C-terminal hydrophobic region.

This sequence belongs to the ERG2 family. Homotrimer. Forms a ternary complex with ANK2 and ITPR3. The complex is disrupted by agonists. Interacts with KCNA4. Interacts with KCNA2; cocaine consumption leads to increased interaction. Interacts with RNF112 in an oxidative stress-regulated manner.

The protein resides in the nucleus inner membrane. Its subcellular location is the nucleus outer membrane. It localises to the nucleus envelope. It is found in the cytoplasmic vesicle. The protein localises to the endoplasmic reticulum membrane. The protein resides in the membrane. Its subcellular location is the lipid droplet. It localises to the cell junction. It is found in the cell membrane. The protein localises to the cell projection. The protein resides in the growth cone. Its subcellular location is the postsynaptic density membrane. Its function is as follows. Functions in lipid transport from the endoplasmic reticulum and is involved in a wide array of cellular functions probably through regulation of the biogenesis of lipid microdomains at the plasma membrane. Involved in the regulation of different receptors it plays a role in BDNF signaling and EGF signaling. Also regulates ion channels like the potassium channel and could modulate neurotransmitter release. Plays a role in calcium signaling through modulation together with ANK2 of the ITP3R-dependent calcium efflux at the endoplasmic reticulum. Plays a role in several other cell functions including proliferation, survival and death. Originally identified for its ability to bind various psychoactive drugs it is involved in learning processes, memory and mood alteration. Necessary for proper mitochondrial axonal transport in motor neurons, in particular the retrograde movement of mitochondria. Plays a role in protecting cells against oxidative stress-induced cell death via its interaction with RNF112. The protein is Sigma non-opioid intracellular receptor 1 (SIGMAR1) of Trichosurus vulpecula (Brush-tailed possum).